Here is a 95-residue protein sequence, read N- to C-terminus: Protein TusB (95 aa).

Belongs to the DsrH/TusB family. As to quaternary structure, heterohexamer, formed by a dimer of trimers. The hexameric TusBCD complex contains 2 copies each of TusB, TusC and TusD. The TusBCD complex interacts with TusE.

It is found in the cytoplasm. Part of a sulfur-relay system required for 2-thiolation of 5-methylaminomethyl-2-thiouridine (mnm(5)s(2)U) at tRNA wobble positions. The protein is Protein TusB of Sodalis glossinidius (strain morsitans).